The sequence spans 986 residues: DNA polymerase (986 aa).

Disordered regions lie at residues 804–824 (DNPG…SPKR) and 944–969 (RKRD…SEND). Over residues 948–968 (DDDDNNDDDDDDGCDSSDSEN) the composition is skewed to acidic residues.

It belongs to the DNA polymerase type-B family.

The enzyme catalyses DNA(n) + a 2'-deoxyribonucleoside 5'-triphosphate = DNA(n+1) + diphosphate. Replicates the viral genome, host DNA polymerases cannot substitute for the viral enzyme in this process. This Bombyx mori (Silk moth) protein is DNA polymerase (POL).